Reading from the N-terminus, the 202-residue chain is Probable GTP-binding protein EngB (202 aa).

Residues 30-201 (NILQIALAGR…WERIQYTIDS (172 aa)) enclose the EngB-type G domain. GTP is bound by residues 38 to 45 (GRSNVGKS), 65 to 69 (GKTRS), 84 to 87 (DLPG), 151 to 154 (TKID), and 180 to 182 (VSS). 2 residues coordinate Mg(2+): Ser45 and Thr67.

Belongs to the TRAFAC class TrmE-Era-EngA-EngB-Septin-like GTPase superfamily. EngB GTPase family. Requires Mg(2+) as cofactor.

Functionally, necessary for normal cell division and for the maintenance of normal septation. This is Probable GTP-binding protein EngB from Lawsonia intracellularis (strain PHE/MN1-00).